The sequence spans 421 residues: Aspartokinase (421 aa).

7–10 (KYGG) contributes to the ATP binding site. 25 to 30 (RIVATK) serves as a coordination point for substrate. Ser41 provides a ligand contact to ATP. Residues 45 to 49 (DTTDE), Glu74, 125 to 126 (LD), 151 to 154 (RGGS), and Ser154 each bind substrate. ATP is bound by residues 174–175 (SD), 180–185 (YTADPR), and Lys210. 2 consecutive ACT domains span residues 267 to 343 (VTVL…YDDQ) and 349 to 421 (LVGA…GTGR). Substrate contacts are provided by residues Asp274, 274–279 (DKPGEA), 292–294 (NID), Gln298, 360–361 (VT), 374–375 (NI), and 381–382 (SE).

It belongs to the aspartokinase family. As to quaternary structure, tetramer consisting of 2 isoforms Alpha (catalytic and regulation) and of a homodimer of 2 isoforms Beta (regulation). The dimerization of the beta isoforms is stabilized by the bonding of threonine.

The enzyme catalyses L-aspartate + ATP = 4-phospho-L-aspartate + ADP. It participates in amino-acid biosynthesis; L-lysine biosynthesis via DAP pathway; (S)-tetrahydrodipicolinate from L-aspartate: step 1/4. Its pathway is amino-acid biosynthesis; L-methionine biosynthesis via de novo pathway; L-homoserine from L-aspartate: step 1/3. The protein operates within amino-acid biosynthesis; L-threonine biosynthesis; L-threonine from L-aspartate: step 1/5. Feedback inhibition by lysine and threonine, but he enzyme is moderately inhibited by lysine alone, and threonine alone has no effect. Its function is as follows. Catalyzes the phosphorylation of the beta-carboxyl group of aspartic acid with ATP to yield 4-phospho-L-aspartate, which is involved in the branched biosynthetic pathway leading to the biosynthesis of amino acids lysine, threonine, isoleucine and methionine. The sequence is that of Aspartokinase (lysC) from Corynebacterium glutamicum (strain ATCC 13032 / DSM 20300 / JCM 1318 / BCRC 11384 / CCUG 27702 / LMG 3730 / NBRC 12168 / NCIMB 10025 / NRRL B-2784 / 534).